Reading from the N-terminus, the 486-residue chain is Methionine aminopeptidase 2-2 (486 aa).

Over residues 1 to 10 (MGSKSPEGHR) the composition is skewed to basic and acidic residues. The segment at 1-120 (MGSKSPEGHR…ALPATELKQT (120 aa)) is disordered. Positions 46–56 (GDDDDDEDAEE) are enriched in acidic residues. Residues 93–108 (KKKKRKKSNKKKKKTK) show a composition bias toward basic residues. His238 contacts substrate. Asp259, Asp270, and His339 together coordinate a divalent metal cation. His347 contributes to the substrate binding site. Residues Glu372 and Glu467 each coordinate a divalent metal cation.

It belongs to the peptidase M24A family. Methionine aminopeptidase eukaryotic type 2 subfamily. Co(2+) is required as a cofactor. It depends on Zn(2+) as a cofactor. Requires Mn(2+) as cofactor. Fe(2+) serves as cofactor.

It localises to the cytoplasm. The catalysed reaction is Release of N-terminal amino acids, preferentially methionine, from peptides and arylamides.. Functionally, cotranslationally removes the N-terminal methionine from nascent proteins. The N-terminal methionine is often cleaved when the second residue in the primary sequence is small and uncharged (Met-Ala-, Cys, Gly, Pro, Ser, Thr, or Val). The protein is Methionine aminopeptidase 2-2 of Aspergillus fumigatus (strain ATCC MYA-4609 / CBS 101355 / FGSC A1100 / Af293) (Neosartorya fumigata).